The primary structure comprises 1190 residues: Tight junction protein 2 (1190 aa).

Serine 16 carries the phosphoserine modification. Positions 33-120 constitute a PDZ 1 domain; it reads TVTLQKDSKR…VAAIVVKRPR (88 aa). Serine 130, serine 150, serine 153, serine 163, serine 168, serine 170, serine 174, serine 200, serine 220, serine 232, serine 244, serine 266, serine 325, serine 398, serine 400, serine 406, serine 415, serine 424, serine 430, and serine 431 each carry phosphoserine. A disordered region spans residues 152–306; that stretch reads RSGYSERSRL…PEPRGRPGPI (155 aa). Positions 169 to 291 are enriched in basic and acidic residues; the sequence is RSWEDSPERG…PRSRSREHPH (123 aa). One can recognise a PDZ 2 domain in the interval 307-385; the sequence is GVLLMKSRAN…KLQLVVLRDS (79 aa). Positions 408–506 are disordered; it reads IESNRSFSPE…RPSPEDEAIY (99 aa). A compositionally biased stretch (basic and acidic residues) spans 415-446; that stretch reads SPEERRHQYSDYDYHSSSEKLKERPSSREDTP. Threonine 455 is modified (phosphothreonine). Serine 499 bears the Phosphoserine mark. Positions 509-590 constitute a PDZ 3 domain; it reads NTKMVRFKKG…GEMVTILAQS (82 aa). The residue at position 574 (tyrosine 574) is a Phosphotyrosine. The 66-residue stretch at 604-669 folds into the SH3 domain; the sequence is GDSFFIRSHF…PNKSRAEQMA (66 aa). The Guanylate kinase-like domain maps to 678 to 876; that stretch reads NAGDRADFWR…WFGSLKDTIQ (199 aa). Residues serine 702 and serine 902 each carry the phosphoserine modification. Residue threonine 905 is modified to Phosphothreonine. A phosphoserine mark is found at serine 913 and serine 920. Disordered regions lie at residues 920–1079 and 1105–1190; these read SDFE…KSVL and NARI…DTEL. Threonine 925 and threonine 933 each carry phosphothreonine. The segment covering 956–967 has biased composition (basic and acidic residues); the sequence is VQHEESIRKPSP. Phosphoserine is present on residues serine 966, serine 978, serine 986, serine 1006, serine 1067, and serine 1068. The span at 994-1014 shows a compositional bias: basic and acidic residues; sequence EPPKAKTQNKEESYDFSKSYE. Residues 1060-1072 are compositionally biased toward acidic residues; the sequence is EGEEVGESSEEQD. At tyrosine 1118 the chain carries Phosphotyrosine. The residue at position 1131 (threonine 1131) is a Phosphothreonine. A phosphoserine mark is found at serine 1147 and serine 1159. Residues 1166 to 1175 are compositionally biased toward basic and acidic residues; sequence YRQQLSEHSK. The interval 1188–1190 is interaction with SCRIB; sequence TEL.

Belongs to the MAGUK family. As to quaternary structure, homodimer. Interacts (via PDZ2 domain) with TJP1/ZO1 (via PDZ2 domain). Interacts with OCLN. Interacts with UBN1. Interacts with SAFB in the nucleus. Interacts with SCRIB. Interacts with USP53 (via the C-terminal region). Interacts with claudins, including CLDN1, CLDN2, CLDN3, CLDN5 and CLDN7. Interacts with CLDN18. Interacts (via N-terminus) with CTNNA1. This protein is found in epithelial cell junctions. Isoform A1 is abundant in the heart and brain. Detected in brain and skeletal muscle. It is present almost exclusively in normal tissues. Isoform C1 is expressed at high level in the kidney, pancreas, heart and placenta. Not detected in brain and skeletal muscle. Found in normal as well as in most neoplastic tissues.

Its subcellular location is the cell junction. The protein resides in the adherens junction. The protein localises to the cell membrane. It is found in the tight junction. It localises to the nucleus. Plays a role in tight junctions and adherens junctions. Acts as a positive regulator of RANKL-induced osteoclast differentiation, potentially via mediating downstream transcriptional activity. This is Tight junction protein 2 from Homo sapiens (Human).